Here is a 431-residue protein sequence, read N- to C-terminus: Serine--tRNA ligase (431 aa).

237–239 (TAE) contacts L-serine. ATP is bound at residue 268 to 270 (RSE). Glu-291 lines the L-serine pocket. ATP is bound at residue 355-358 (EISS). Position 390 (Ser-390) interacts with L-serine.

The protein belongs to the class-II aminoacyl-tRNA synthetase family. Type-1 seryl-tRNA synthetase subfamily. In terms of assembly, homodimer. The tRNA molecule binds across the dimer.

The protein localises to the cytoplasm. It catalyses the reaction tRNA(Ser) + L-serine + ATP = L-seryl-tRNA(Ser) + AMP + diphosphate + H(+). The enzyme catalyses tRNA(Sec) + L-serine + ATP = L-seryl-tRNA(Sec) + AMP + diphosphate + H(+). The protein operates within aminoacyl-tRNA biosynthesis; selenocysteinyl-tRNA(Sec) biosynthesis; L-seryl-tRNA(Sec) from L-serine and tRNA(Sec): step 1/1. Functionally, catalyzes the attachment of serine to tRNA(Ser). Is also able to aminoacylate tRNA(Sec) with serine, to form the misacylated tRNA L-seryl-tRNA(Sec), which will be further converted into selenocysteinyl-tRNA(Sec). In Neisseria gonorrhoeae (strain NCCP11945), this protein is Serine--tRNA ligase.